The sequence spans 334 residues: Homoserine kinase (334 aa).

This sequence belongs to the pseudomonas-type ThrB family.

The enzyme catalyses L-homoserine + ATP = O-phospho-L-homoserine + ADP + H(+). It participates in amino-acid biosynthesis; L-threonine biosynthesis; L-threonine from L-aspartate: step 4/5. The sequence is that of Homoserine kinase from Cupriavidus taiwanensis (strain DSM 17343 / BCRC 17206 / CCUG 44338 / CIP 107171 / LMG 19424 / R1) (Ralstonia taiwanensis (strain LMG 19424)).